The following is a 649-amino-acid chain: MLGPESDGRRPTQGERGPGYPGEPMDKYQVLYQLNPGALGVNLVVEEMETKVKRVIKQVECMDDHQASQALEELMPLLKLRHAHISVYRELFIMWNGEISSLYLCLVMEFNKLSFQEVIEDKRKAKEIIDSKWMQNVLGQVLDALEYLHHLDIIHRNLKPSNIILVSSDHCKLQDLSSNVLMTNKAKWNIRAESTEAMYLRKSLRQSPGSLETVLKTMEEKQIPDAETFGNLLPGMLQIDPSDRTTIKDVVHITFLSGSFKSSCISLTLYRETVPASITDMLLEGNVASILEVMQNFSGWPEVQFRAMKRLLKMPADQLGLPWRPELVEVVVTTMQLHDRVLDIQLCACSLLLHLLGQAMVHHPEAKALCNQAITSAVLSALWSYPEEESLLVLVYSLLAITTTQESQSESESVSEELQNAGLLEHILEHLNSSLESRDVCVSGLGLLWALLLDGIIVNKAPLEKVPDLISQVLATYPADGEMAEASCGVFWLLSLLGCIKEQQFEQVVALLLQSIRLCQNRVLLVNNAYRGLASLVEVSELAAFKVVVQEEGGSGLSLIKETYQLHKDDPEVVENVGMLLVHLASYEEILPELVSSSMKALVQEIKERFTSSLVSDRSAFSKPGLPPGGSPQPGCTASGGLEQMIAWN.

Residues 1–13 (MLGPESDGRRPTQ) show a composition bias toward basic and acidic residues. The disordered stretch occupies residues 1–23 (MLGPESDGRRPTQGERGPGYPGE). Positions 28–379 (YQVLYQLNPG…CNQAITSAVL (352 aa)) constitute a Protein kinase domain. Residues 34 to 42 (LNPGALGVN) and K57 contribute to the ATP site. The disordered stretch occupies residues 621 to 640 (FSKPGLPPGGSPQPGCTASG).

The protein belongs to the protein kinase superfamily. Ser/Thr protein kinase family. STKL subfamily.

The protein is Serine/threonine kinase-like domain-containing protein STKLD1 (STKLD1) of Macaca fascicularis (Crab-eating macaque).